A 156-amino-acid chain; its full sequence is MKLFILAVGHKMPGWIASGFDEYTKRMPPELRIELREIKPELRSGGRSAESVMAAERQKIEAALPKGARIVALDERGRDWTTMQLAQALPAWQQDGRDVAFVIGGADGLDPELKARADVLLRISSMTLPHGMVRVLLAEQLYRAWSITQNHPYHRA.

S-adenosyl-L-methionine contacts are provided by residues leucine 73, glycine 104, and 123-128; that span reads ISSMTL.

This sequence belongs to the RNA methyltransferase RlmH family. As to quaternary structure, homodimer.

The protein localises to the cytoplasm. It carries out the reaction pseudouridine(1915) in 23S rRNA + S-adenosyl-L-methionine = N(3)-methylpseudouridine(1915) in 23S rRNA + S-adenosyl-L-homocysteine + H(+). Its function is as follows. Specifically methylates the pseudouridine at position 1915 (m3Psi1915) in 23S rRNA. This chain is Ribosomal RNA large subunit methyltransferase H, found in Burkholderia ambifaria (strain MC40-6).